The following is a 503-amino-acid chain: Trehalose-6-phosphate synthase (503 aa).

The span at 1–14 (MTDQSGNGVRSGSA) shows a compositional bias: polar residues. Residues 1–20 (MTDQSGNGVRSGSASEAPPS) form a disordered region. Arg31 is a D-glucose 6-phosphate binding site. UDP-alpha-D-glucose is bound at residue 51 to 52 (GG). Positions 109 and 163 each coordinate D-glucose 6-phosphate. Residues Arg305 and Lys310 each coordinate UDP-alpha-D-glucose. Arg343 contacts D-glucose 6-phosphate. 408 to 412 (LVAKE) is a UDP-alpha-D-glucose binding site.

Belongs to the glycosyltransferase 20 family. As to quaternary structure, homotetramer.

It carries out the reaction ADP-alpha-D-glucose + D-glucose 6-phosphate = alpha,alpha-trehalose 6-phosphate + ADP + H(+). The enzyme catalyses CDP-alpha-D-glucose + D-glucose 6-phosphate = alpha,alpha-trehalose 6-phosphate + CDP + H(+). The catalysed reaction is GDP-alpha-D-glucose + D-glucose 6-phosphate = alpha,alpha-trehalose 6-phosphate + GDP + H(+). It catalyses the reaction TDP-alpha-D-glucose + D-glucose 6-phosphate = 5-methyl-UDP + alpha,alpha-trehalose 6-phosphate + H(+). It carries out the reaction D-glucose 6-phosphate + UDP-alpha-D-glucose = alpha,alpha-trehalose 6-phosphate + UDP + H(+). It functions in the pathway glycan biosynthesis; trehalose biosynthesis. Probably involved in the osmoprotection via the biosynthesis of trehalose and in the production of glycogen and alpha-glucan via the TreS-Pep2 branch involved in the biosynthesis of maltose-1-phosphate (M1P). Catalyzes the transfer of glucose from UDP-glucose (UDP-Glc) to D-glucose 6-phosphate (Glc-6-P) to form trehalose-6-phosphate. Probably also able to use ADP-Glc, CDP-Glc, GDP-Glc and TDP-Glc as glucosyl donors. The sequence is that of Trehalose-6-phosphate synthase from Mycolicibacterium gilvum (strain PYR-GCK) (Mycobacterium gilvum (strain PYR-GCK)).